The following is an 881-amino-acid chain: MNSTETMADLSSYTPMMQQYFKVKLEHQHALLFYRMGDFYELFFDDARKAAKLLGITLTHRGKANGEPIPMAGVPYHAAEGYLARLVRAGQTVAICEQVGEGENAGSRCKAPMERKVVRIITPGTITDDALLGSYQSSNLVALCIQQNKIGIALLDLSASIFKVQQHEFKTEQLYIELARLMPSEIVVDEDLVDQNILEQIKKQIECSITKRPNVDFNLNNAQKTLCDQFGVTTLSGFGIDHLPLAKAAAAALIHYAKETQKTALPHIRSIQLEQSTDFIALDPITRRNLEIIDPLFEHGTSLFNLINDCQTAMGGRLLSRILMQPIRDTAILDARLDATEQLLIGYHESPVRLVLKEIGDIERVLSRVALGTARPRDLVQLRQACAQIPFLRHALLPAIQTKSSKLLNELDHELGDFKDLHQLLLSAIVENPPVLLRDGNVIAEGYDAELDELRKIRDHAGQFLVDLEIKERESSGIPTLKIGYNRVSGYYIELTRAQAEQAPAYYIRRQTLKNAERYITPELKSFEDKVLSSESRALAREKLLFESLLETLKKNIANLQMMSSAIAQIDVLANFAHQARLQNWNRPDFSPEIGIKIHDGRHPVVEALSKTPYTPNDTFLDSQHRMAIITGPNMGGKSTFMRQTALISLLAYCGSYVPAKSAKLGPIDRIFTRIGSADDLSTGKSTFMVEMTETSQILHHATHQSLVLMDEVGRGTSTYDGLSLAWACVLDLTKRIKCLCLFATHYFELTELGSESAIDNYHVTAKEMNGNLILLHKVQHGPASQSHGLQVAKLAGIPASVIKEAQKRLKILEKQQQQYFQTAVQNDLFAIPELPQIDETKIEIKKTSPVLDHLKQLDVDSLTPRQALEALYQLKDQLEH.

632-639 is an ATP binding site; sequence GPNMGGKS.

The protein belongs to the DNA mismatch repair MutS family.

This protein is involved in the repair of mismatches in DNA. It is possible that it carries out the mismatch recognition step. This protein has a weak ATPase activity. This chain is DNA mismatch repair protein MutS, found in Acinetobacter baylyi (strain ATCC 33305 / BD413 / ADP1).